A 215-amino-acid chain; its full sequence is UPF0502 protein Shew_1617 (215 aa).

This sequence belongs to the UPF0502 family.

The polypeptide is UPF0502 protein Shew_1617 (Shewanella loihica (strain ATCC BAA-1088 / PV-4)).